The sequence spans 104 residues: Cytochrome c6 (104 aa).

Residues 1–20 (MKSLLTFILTTIFCIQQVWA) form the signal peptide. Positions 34, 37, 38, and 78 each coordinate heme c.

The protein belongs to the cytochrome c family. PetJ subfamily. As to quaternary structure, monomer. In terms of processing, binds 1 heme c group covalently per subunit.

The protein resides in the plastid. The protein localises to the chloroplast thylakoid lumen. In terms of biological role, functions as an electron carrier between membrane-bound cytochrome b6-f and photosystem I in oxygenic photosynthesis. The chain is Cytochrome c6 from Cyanidioschyzon merolae (strain NIES-3377 / 10D) (Unicellular red alga).